Here is a 596-residue protein sequence, read N- to C-terminus: uncharacterized protein (596 aa).

Residues 1–20 (MRYKPLLLALMLVFSTPAVA) form the signal peptide. Composition is skewed to basic and acidic residues over residues 25–90 (AHNR…KEAT) and 161–184 (VRSD…NAKT). The tract at residues 25–184 (AHNRSAEVKK…KYREEKNAKT (160 aa)) is disordered. 2 coiled-coil regions span residues 177–281 (REEK…RFVS) and 318–454 (NREV…TAED).

Belongs to the peptidase M23B family.

This is an uncharacterized protein from Neisseria meningitidis serogroup B (strain ATCC BAA-335 / MC58).